Reading from the N-terminus, the 65-residue chain is Probable movement protein p8 (65 aa).

A compositionally biased stretch (polar residues) spans 1 to 10 (MENTENVRSG). Residues 1 to 47 (MENTENVRSGRNQREYSKERQQEGGYKEVSKAAVRKEGDVKQDMGPS) form a disordered region. Residues 12–42 (NQREYSKERQQEGGYKEVSKAAVRKEGDVKQ) are compositionally biased toward basic and acidic residues.

It belongs to the carmovirus/necrovirus/panicovirus movement protein p8 family.

In terms of biological role, cell-to-cell movement. The protein is Probable movement protein p8 of Tobacco necrosis virus (strain D) (TNV-D).